The primary structure comprises 291 residues: Light-independent protochlorophyllide reductase iron-sulfur ATP-binding protein (291 aa).

ATP contacts are provided by residues 10 to 15 and K39; that span reads GIGKST. Residue S14 participates in Mg(2+) binding. [4Fe-4S] cluster is bound by residues C95 and C129. ATP is bound at residue 180–181; it reads NR.

This sequence belongs to the NifH/BchL/ChlL family. Homodimer. Protochlorophyllide reductase is composed of three subunits; ChlL, ChlN and ChlB. Requires [4Fe-4S] cluster as cofactor.

It localises to the plastid. The protein resides in the chloroplast. It catalyses the reaction chlorophyllide a + oxidized 2[4Fe-4S]-[ferredoxin] + 2 ADP + 2 phosphate = protochlorophyllide a + reduced 2[4Fe-4S]-[ferredoxin] + 2 ATP + 2 H2O. It functions in the pathway porphyrin-containing compound metabolism; chlorophyll biosynthesis (light-independent). Functionally, component of the dark-operative protochlorophyllide reductase (DPOR) that uses Mg-ATP and reduced ferredoxin to reduce ring D of protochlorophyllide (Pchlide) to form chlorophyllide a (Chlide). This reaction is light-independent. The L component serves as a unique electron donor to the NB-component of the complex, and binds Mg-ATP. In Larix decidua (European larch), this protein is Light-independent protochlorophyllide reductase iron-sulfur ATP-binding protein.